The primary structure comprises 320 residues: Acetyl-coenzyme A carboxylase carboxyl transferase subunit alpha (320 aa).

Positions 42–295 (IEEKALAALT…GDAIAKSFAD (254 aa)) constitute a CoA carboxyltransferase C-terminal domain.

The protein belongs to the AccA family. As to quaternary structure, acetyl-CoA carboxylase is a heterohexamer composed of biotin carboxyl carrier protein (AccB), biotin carboxylase (AccC) and two subunits each of ACCase subunit alpha (AccA) and ACCase subunit beta (AccD).

The protein localises to the cytoplasm. The enzyme catalyses N(6)-carboxybiotinyl-L-lysyl-[protein] + acetyl-CoA = N(6)-biotinyl-L-lysyl-[protein] + malonyl-CoA. Its pathway is lipid metabolism; malonyl-CoA biosynthesis; malonyl-CoA from acetyl-CoA: step 1/1. Component of the acetyl coenzyme A carboxylase (ACC) complex. First, biotin carboxylase catalyzes the carboxylation of biotin on its carrier protein (BCCP) and then the CO(2) group is transferred by the carboxyltransferase to acetyl-CoA to form malonyl-CoA. This Rhodopseudomonas palustris (strain BisA53) protein is Acetyl-coenzyme A carboxylase carboxyl transferase subunit alpha.